The sequence spans 326 residues: S-methyl-5'-thioadenosine phosphorylase (326 aa).

Residues serine 44, 86-87 (RH), and 119-120 (SA) each bind phosphate. Methionine 220 provides a ligand contact to substrate. Phosphate is bound at residue threonine 221. Residue 244 to 246 (DYD) coordinates substrate.

The protein belongs to the PNP/MTAP phosphorylase family. MTAP subfamily. Homohexamer. Dimer of a homotrimer.

It catalyses the reaction S-methyl-5'-thioadenosine + phosphate = 5-(methylsulfanyl)-alpha-D-ribose 1-phosphate + adenine. It participates in amino-acid biosynthesis; L-methionine biosynthesis via salvage pathway; S-methyl-5-thio-alpha-D-ribose 1-phosphate from S-methyl-5'-thioadenosine (phosphorylase route): step 1/1. In terms of biological role, catalyzes the reversible phosphorylation of S-methyl-5'-thioadenosine (MTA) to adenine and 5-methylthioribose-1-phosphate. Involved in the breakdown of MTA, a major by-product of polyamine biosynthesis. Responsible for the first step in the methionine salvage pathway after MTA has been generated from S-adenosylmethionine. Has broad substrate specificity with 6-aminopurine nucleosides as preferred substrates. This chain is S-methyl-5'-thioadenosine phosphorylase, found in Synechocystis sp. (strain PCC 6803 / GT-S).